The sequence spans 333 residues: DNA-directed RNA polymerase subunit alpha (333 aa).

Positions 1–234 are alpha N-terminal domain (alpha-NTD); that stretch reads MQISVNEFLT…QQLAAFVDLK (234 aa). Residues 248–333 are alpha C-terminal domain (alpha-CTD); sequence IDPILLRPVD…SLKKDDKATA (86 aa).

The protein belongs to the RNA polymerase alpha chain family. As to quaternary structure, homodimer. The RNAP catalytic core consists of 2 alpha, 1 beta, 1 beta' and 1 omega subunit. When a sigma factor is associated with the core the holoenzyme is formed, which can initiate transcription.

The catalysed reaction is RNA(n) + a ribonucleoside 5'-triphosphate = RNA(n+1) + diphosphate. Its function is as follows. DNA-dependent RNA polymerase catalyzes the transcription of DNA into RNA using the four ribonucleoside triphosphates as substrates. This is DNA-directed RNA polymerase subunit alpha from Pseudomonas entomophila (strain L48).